Consider the following 168-residue polypeptide: Pathogenesis-related protein 1A (168 aa).

A signal peptide spans 1–30 (MGFVLFSQLPSFLLVSTLLLFLVISHSCRA). The SCP domain maps to 38–156 (LDAHNTARAD…NGGYVVSCNY (119 aa)).

This sequence belongs to the CRISP family. Post-translationally, three disulfide bonds are present.

It is found in the vacuole. Its function is as follows. Probably involved in the defense reaction of plants against pathogens. The sequence is that of Pathogenesis-related protein 1A from Nicotiana tabacum (Common tobacco).